The sequence spans 164 residues: uncharacterized protein (164 aa).

Positions 144–164 are disordered; the sequence is GFISPEKEHESEDMTSQSLVA.

This is an uncharacterized protein from Synechocystis sp. (strain ATCC 27184 / PCC 6803 / Kazusa).